The sequence spans 182 residues: ATP synthase subunit b, chloroplastic (182 aa).

Residues 29–47 (IINLALLIVLVINVAKDVL) form a helical membrane-spanning segment.

The protein belongs to the ATPase B chain family. F-type ATPases have 2 components, F(1) - the catalytic core - and F(0) - the membrane proton channel. F(1) has five subunits: alpha(3), beta(3), gamma(1), delta(1), epsilon(1). F(0) has four main subunits: a(1), b(1), b'(1) and c(10-14). The alpha and beta chains form an alternating ring which encloses part of the gamma chain. F(1) is attached to F(0) by a central stalk formed by the gamma and epsilon chains, while a peripheral stalk is formed by the delta, b and b' chains.

It localises to the plastid. Its subcellular location is the chloroplast thylakoid membrane. In terms of biological role, f(1)F(0) ATP synthase produces ATP from ADP in the presence of a proton or sodium gradient. F-type ATPases consist of two structural domains, F(1) containing the extramembraneous catalytic core and F(0) containing the membrane proton channel, linked together by a central stalk and a peripheral stalk. During catalysis, ATP synthesis in the catalytic domain of F(1) is coupled via a rotary mechanism of the central stalk subunits to proton translocation. Functionally, component of the F(0) channel, it forms part of the peripheral stalk, linking F(1) to F(0). In Heterosigma akashiwo (strain NIES-293 / 8280G21-1), this protein is ATP synthase subunit b, chloroplastic.